The following is a 268-amino-acid chain: ClpXP adapter protein SpxH (268 aa).

This sequence belongs to the SpxH family. In terms of assembly, interacts with Spx.

The protein resides in the cytoplasm. Adapter protein required for efficient degradation of Spx by ClpXP under non-stress conditions. Interaction with Spx stabilizes Spx and exposes the C-terminus of Spx for recognition and proteolysis by ClpXP. The protein is ClpXP adapter protein SpxH of Staphylococcus aureus (strain MRSA252).